Reading from the N-terminus, the 452-residue chain is Tripartite motif-containing protein 51G (452 aa).

Residues Cys-15–Lys-56 form an RING-type zinc finger. The B box-type zinc-finger motif lies at Ser-88–Thr-129. Residues Cys-93, His-96, Cys-115, and His-121 each coordinate Zn(2+). The B30.2/SPRY domain maps to Glu-269–Phe-452.

It belongs to the TRIM/RBCC family.

The protein is Tripartite motif-containing protein 51G of Homo sapiens (Human).